The chain runs to 250 residues: Ribonucleotide monophosphatase NagD (250 aa).

Residues D9 and D11 each contribute to the Mg(2+) site. Residue D11 is part of the active site. Substrate-binding positions include D11, 42 to 43 (TN), and K176. D201 is a Mg(2+) binding site. 202–205 (NLRT) contacts substrate.

This sequence belongs to the HAD-like hydrolase superfamily. NagD family. In terms of assembly, monomer. Mg(2+) is required as a cofactor. The cofactor is Mn(2+). It depends on Co(2+) as a cofactor. Requires Zn(2+) as cofactor.

The enzyme catalyses a ribonucleoside 5'-phosphate + H2O = a ribonucleoside + phosphate. Its function is as follows. Catalyzes the dephosphorylation of an unusually broad range of substrate including deoxyribo- and ribonucleoside tri-, di-, and monophosphates, as well as polyphosphate and glucose-1-P (Glu1P). This is Ribonucleotide monophosphatase NagD (nagD) from Escherichia coli O157:H7.